The primary structure comprises 335 residues: DNA-directed RNA polymerases I and III subunit RPAC1 (335 aa).

Residue Ser-2 is modified to N-acetylserine. Residue Ser-17 is modified to Phosphoserine.

The protein belongs to the archaeal Rpo3/eukaryotic RPB3 RNA polymerase subunit family. Component of the RNA polymerase I (Pol I) complex consisting of 14 subunits: RPA135, RPA190, RPC40, RPA14, RPB5, RPO26, RPA43, RPB8, RPA12, RPB10, RPC19, RPC10, RPA49 and RPA34. The complex is composed of a horseshoe-shaped core containing ten subunits (RPA135, RPA190, RPB5, RPO26, RPB8, RPB10, RPC10, RPA12, RPC19 and RPC40) where RPA135 and RPA190 form the DNA-binding cleft. Outside of the core, RPA14 and RPA43 form the stalk that mediates interactions with transcription initiation factors and newly synthesized RNA. Component of the RNA polymerase III (Pol III) complex consisting of at least 17 subunits. Interacts with the RPC19/RPAC2 and RPC53/RPC4. Interacts with retrotransposons Ty integrase, targeting Ty1, Ty2 and Ty4 integration upstream of pol III-transcribed genes.

It localises to the nucleus. Its subcellular location is the nucleolus. DNA-dependent RNA polymerases catalyze the transcription of DNA into RNA using the four ribonucleoside triphosphates as substrates. Common component of RNA polymerases I (Pol I) and III (Pol III) which synthesize ribosomal RNA precursors and small RNAs, such as 5S rRNA and tRNAs, respectively. RPC40 is part of the polymerase core and may function as a clamp element that moves to open and close the cleft. Plays an important role in targeting retrotransposons Ty integration upstream of pol III-transcribed genes such as tRNA genes, allowing Ty1, Ty2 and Ty4 to proliferate and yet minimizing genetic damage. The protein is DNA-directed RNA polymerases I and III subunit RPAC1 of Saccharomyces cerevisiae (strain ATCC 204508 / S288c) (Baker's yeast).